The chain runs to 129 residues: Small ribosomal subunit protein uS11 (129 aa).

This sequence belongs to the universal ribosomal protein uS11 family. As to quaternary structure, part of the 30S ribosomal subunit. Interacts with proteins S7 and S18. Binds to IF-3.

Its function is as follows. Located on the platform of the 30S subunit, it bridges several disparate RNA helices of the 16S rRNA. Forms part of the Shine-Dalgarno cleft in the 70S ribosome. The protein is Small ribosomal subunit protein uS11 of Yersinia pseudotuberculosis serotype O:1b (strain IP 31758).